The following is a 502-amino-acid chain: NAD(P)H-quinone oxidoreductase subunit 2, chloroplastic (502 aa).

A run of 14 helical transmembrane segments spans residues 15 to 35 (VLPE…DLIF), 42 to 62 (VLPY…LFQW), 79 to 99 (LSIA…LLSI), 108 to 128 (TLSE…LLCG), 132 to 152 (ILMI…LTGY), 167 to 187 (LLIG…LYGL), 210 to 230 (LASL…IAAA), 253 to 275 (VSSK…PYII), 278 to 298 (WHNI…IIAI), 307 to 327 (LGYS…AGNI), 334 to 354 (LVYM…VILF), 375 to 395 (ILAL…PFGG), 413 to 433 (LLVF…IKII), and 468 to 488 (ILIC…IISI).

It belongs to the complex I subunit 2 family. In terms of assembly, NDH is composed of at least 16 different subunits, 5 of which are encoded in the nucleus.

The protein localises to the plastid. It is found in the chloroplast thylakoid membrane. The catalysed reaction is a plastoquinone + NADH + (n+1) H(+)(in) = a plastoquinol + NAD(+) + n H(+)(out). It carries out the reaction a plastoquinone + NADPH + (n+1) H(+)(in) = a plastoquinol + NADP(+) + n H(+)(out). Functionally, NDH shuttles electrons from NAD(P)H:plastoquinone, via FMN and iron-sulfur (Fe-S) centers, to quinones in the photosynthetic chain and possibly in a chloroplast respiratory chain. The immediate electron acceptor for the enzyme in this species is believed to be plastoquinone. Couples the redox reaction to proton translocation, and thus conserves the redox energy in a proton gradient. The chain is NAD(P)H-quinone oxidoreductase subunit 2, chloroplastic from Mesostigma viride (Green alga).